Reading from the N-terminus, the 134-residue chain is MPTIQQLVRKGRESFADKSKSPALNSCPQRRGVCVRVYTTTPKKPNSAMRKVARVRLTNSKEVNAYIPGEGHNLQEHSIVLVRGGRVKDLPGVRYHIVRGTLDTAGVNGRTQRRSKYGAKRPKPGQAPAAKGKK.

The interval 1–26 (MPTIQQLVRKGRESFADKSKSPALNS) is disordered. Residues 10 to 20 (KGRESFADKSK) are compositionally biased toward basic and acidic residues. Residue aspartate 89 is modified to 3-methylthioaspartic acid. Residues 103 to 134 (DTAGVNGRTQRRSKYGAKRPKPGQAPAAKGKK) are disordered. Over residues 111-123 (TQRRSKYGAKRPK) the composition is skewed to basic residues. Residues 124–134 (PGQAPAAKGKK) show a composition bias toward low complexity.

Belongs to the universal ribosomal protein uS12 family. As to quaternary structure, part of the 30S ribosomal subunit. Contacts proteins S8 and S17. May interact with IF1 in the 30S initiation complex.

Functionally, with S4 and S5 plays an important role in translational accuracy. Its function is as follows. Interacts with and stabilizes bases of the 16S rRNA that are involved in tRNA selection in the A site and with the mRNA backbone. Located at the interface of the 30S and 50S subunits, it traverses the body of the 30S subunit contacting proteins on the other side and probably holding the rRNA structure together. The combined cluster of proteins S8, S12 and S17 appears to hold together the shoulder and platform of the 30S subunit. This chain is Small ribosomal subunit protein uS12, found in Porphyromonas gingivalis (strain ATCC BAA-308 / W83).